The primary structure comprises 831 residues: Serine/threonine-protein kinase ATG1 (831 aa).

Residues 21–321 form the Protein kinase domain; it reads YSVEKEIGKG…FTDFFNNEVV (301 aa). ATP-binding positions include 27–35 and K50; that span reads IGKGSFAVV. Catalysis depends on D168, which acts as the Proton acceptor. 2 stretches are compositionally biased toward polar residues: residues 360-382 and 405-419; these read QQESAHIPPTQTDENTSVQTGVR and NSQNPEQSYQSASQK. The tract at residues 360-419 is disordered; the sequence is QQESAHIPPTQTDENTSVQTGVRRTSGKERLATNHPPHQQIHPEDNSQNPEQSYQSASQK.

The protein belongs to the protein kinase superfamily. Ser/Thr protein kinase family. APG1/unc-51/ULK1 subfamily. In terms of assembly, homodimer. Forms a ternary complex with ATG13 and ATG17.

The protein resides in the cytoplasm. It is found in the preautophagosomal structure membrane. The enzyme catalyses L-seryl-[protein] + ATP = O-phospho-L-seryl-[protein] + ADP + H(+). The catalysed reaction is L-threonyl-[protein] + ATP = O-phospho-L-threonyl-[protein] + ADP + H(+). Its function is as follows. Serine/threonine protein kinase involved in the cytoplasm to vacuole transport (Cvt) and found to be essential in autophagy, where it is required for the formation of autophagosomes. Involved in the clearance of protein aggregates which cannot be efficiently cleared by the proteasome. Required for selective autophagic degradation of the nucleus (nucleophagy) as well as for mitophagy which contributes to regulate mitochondrial quantity and quality by eliminating the mitochondria to a basal level to fulfill cellular energy requirements and preventing excess ROS production. Also involved in endoplasmic reticulum-specific autophagic process, in selective removal of ER-associated degradation (ERAD) substrates. Plays a key role in ATG9 and ATG23 cycling through the pre-autophagosomal structure and is necessary to promote ATG18 binding to ATG9 through phosphorylation of ATG9. Catalyzes phosphorylation of ATG4, decreasing the interaction between ATG4 and ATG8 and impairing deconjugation of PE-conjugated forms of ATG8. The sequence is that of Serine/threonine-protein kinase ATG1 from Kluyveromyces lactis (strain ATCC 8585 / CBS 2359 / DSM 70799 / NBRC 1267 / NRRL Y-1140 / WM37) (Yeast).